Reading from the N-terminus, the 199-residue chain is FMN-dependent NADH:quinone oxidoreductase 1 (199 aa).

Residues S10, 17-19 (SNS), and 87-90 (MYNF) contribute to the FMN site.

Belongs to the azoreductase type 1 family. In terms of assembly, homodimer. FMN is required as a cofactor.

It carries out the reaction 2 a quinone + NADH + H(+) = 2 a 1,4-benzosemiquinone + NAD(+). The enzyme catalyses N,N-dimethyl-1,4-phenylenediamine + anthranilate + 2 NAD(+) = 2-(4-dimethylaminophenyl)diazenylbenzoate + 2 NADH + 2 H(+). Quinone reductase that provides resistance to thiol-specific stress caused by electrophilic quinones. In terms of biological role, also exhibits azoreductase activity. Catalyzes the reductive cleavage of the azo bond in aromatic azo compounds to the corresponding amines. This is FMN-dependent NADH:quinone oxidoreductase 1 from Mesoplasma florum (strain ATCC 33453 / NBRC 100688 / NCTC 11704 / L1) (Acholeplasma florum).